We begin with the raw amino-acid sequence, 363 residues long: tRNA N6-adenosine threonylcarbamoyltransferase (363 aa).

Fe cation contacts are provided by His121 and His125. Substrate is bound by residues Leu143–Gly147, Asp176, Gly189, and Asn287. Asp315 contacts Fe cation.

The protein belongs to the KAE1 / TsaD family. It depends on Fe(2+) as a cofactor.

The protein localises to the cytoplasm. It carries out the reaction L-threonylcarbamoyladenylate + adenosine(37) in tRNA = N(6)-L-threonylcarbamoyladenosine(37) in tRNA + AMP + H(+). In terms of biological role, required for the formation of a threonylcarbamoyl group on adenosine at position 37 (t(6)A37) in tRNAs that read codons beginning with adenine. Is involved in the transfer of the threonylcarbamoyl moiety of threonylcarbamoyl-AMP (TC-AMP) to the N6 group of A37, together with TsaE and TsaB. TsaD likely plays a direct catalytic role in this reaction. The sequence is that of tRNA N6-adenosine threonylcarbamoyltransferase from Rhodopseudomonas palustris (strain BisB5).